We begin with the raw amino-acid sequence, 128 residues long: Infection structure-specific protein 56 (128 aa).

Composition is skewed to polar residues over residues 27–36 (HATYPQSQPH) and 87–101 (TSIS…DSQS). Disordered stretches follow at residues 27-48 (HATY…AVPS) and 86-128 (GTSI…STSA). Residues 115-128 (KDAKKELKDPSTSA) show a composition bias toward basic and acidic residues.

Functionally, general role in the development of germlings including formation of the infection structures. In Uromyces appendiculatus (Rust fungus), this protein is Infection structure-specific protein 56 (INF56).